The following is a 201-amino-acid chain: Small ribosomal subunit protein uS4c (201 aa).

Residues 20-43 (GLTSKRPRAGSDLRNQSRAGKKSQ) are disordered. In terms of domain architecture, S4 RNA-binding spans 89–150 (MRLDNILFRL…EQKSRVMIQN (62 aa)).

It belongs to the universal ribosomal protein uS4 family. As to quaternary structure, part of the 30S ribosomal subunit. Contacts protein S5. The interaction surface between S4 and S5 is involved in control of translational fidelity.

Its subcellular location is the plastid. It localises to the chloroplast. Its function is as follows. One of the primary rRNA binding proteins, it binds directly to 16S rRNA where it nucleates assembly of the body of the 30S subunit. With S5 and S12 plays an important role in translational accuracy. The sequence is that of Small ribosomal subunit protein uS4c (rps4) from Populus alba (White poplar).